The chain runs to 343 residues: Ribosomal RNA small subunit methyltransferase C (343 aa).

Belongs to the methyltransferase superfamily. RsmC family. Monomer.

Its subcellular location is the cytoplasm. It carries out the reaction guanosine(1207) in 16S rRNA + S-adenosyl-L-methionine = N(2)-methylguanosine(1207) in 16S rRNA + S-adenosyl-L-homocysteine + H(+). In terms of biological role, specifically methylates the guanine in position 1207 of 16S rRNA in the 30S particle. This is Ribosomal RNA small subunit methyltransferase C from Escherichia coli (strain K12 / DH10B).